Reading from the N-terminus, the 411-residue chain is Ornithine cyclodeaminase (411 aa).

Residues Asn-236, Ala-237, Asp-315, Thr-347, Met-348, Leu-349, His-350, Asp-368, Asp-391, and Val-392 each contribute to the NAD(+) site.

It belongs to the AgrE/ArgZ ornithine cyclodeaminase family. NAD(+) serves as cofactor.

The catalysed reaction is L-ornithine = L-proline + NH4(+). In terms of biological role, catalyzes the conversion of ornithine to proline, with the release of ammonia. The polypeptide is Ornithine cyclodeaminase (Methanothermobacter thermautotrophicus (strain ATCC 29096 / DSM 1053 / JCM 10044 / NBRC 100330 / Delta H) (Methanobacterium thermoautotrophicum)).